Here is a 382-residue protein sequence, read N- to C-terminus: Dual-specificity RNA methyltransferase RlmN (382 aa).

Glu94 serves as the catalytic Proton acceptor. Residues 100–336 (EANRGTLCVS…NTITRKTRGD (237 aa)) form the Radical SAM core domain. Cys107 and Cys342 are disulfide-bonded. The [4Fe-4S] cluster site is built by Cys114, Cys118, and Cys121. S-adenosyl-L-methionine is bound by residues 168 to 169 (GE), Ser200, 222 to 224 (SLH), and Asn299. Catalysis depends on Cys342, which acts as the S-methylcysteine intermediate.

Belongs to the radical SAM superfamily. RlmN family. It depends on [4Fe-4S] cluster as a cofactor.

It localises to the cytoplasm. The enzyme catalyses adenosine(2503) in 23S rRNA + 2 reduced [2Fe-2S]-[ferredoxin] + 2 S-adenosyl-L-methionine = 2-methyladenosine(2503) in 23S rRNA + 5'-deoxyadenosine + L-methionine + 2 oxidized [2Fe-2S]-[ferredoxin] + S-adenosyl-L-homocysteine. It catalyses the reaction adenosine(37) in tRNA + 2 reduced [2Fe-2S]-[ferredoxin] + 2 S-adenosyl-L-methionine = 2-methyladenosine(37) in tRNA + 5'-deoxyadenosine + L-methionine + 2 oxidized [2Fe-2S]-[ferredoxin] + S-adenosyl-L-homocysteine. Specifically methylates position 2 of adenine 2503 in 23S rRNA and position 2 of adenine 37 in tRNAs. m2A2503 modification seems to play a crucial role in the proofreading step occurring at the peptidyl transferase center and thus would serve to optimize ribosomal fidelity. This is Dual-specificity RNA methyltransferase RlmN from Legionella pneumophila (strain Lens).